The sequence spans 334 residues: Phosphate acyltransferase (334 aa).

Belongs to the PlsX family. As to quaternary structure, homodimer. Probably interacts with PlsY.

The protein resides in the cytoplasm. It carries out the reaction a fatty acyl-[ACP] + phosphate = an acyl phosphate + holo-[ACP]. The protein operates within lipid metabolism; phospholipid metabolism. In terms of biological role, catalyzes the reversible formation of acyl-phosphate (acyl-PO(4)) from acyl-[acyl-carrier-protein] (acyl-ACP). This enzyme utilizes acyl-ACP as fatty acyl donor, but not acyl-CoA. The chain is Phosphate acyltransferase from Streptococcus thermophilus (strain CNRZ 1066).